A 149-amino-acid chain; its full sequence is Succinate dehydrogenase assembly factor 2, mitochondrial (149 aa).

The protein belongs to the SDHAF2 family. In terms of assembly, interacts with the flavoprotein subunit within the SDH catalytic dimer.

It localises to the mitochondrion matrix. Functionally, plays an essential role in the assembly of succinate dehydrogenase (SDH), an enzyme complex (also referred to as respiratory complex II) that is a component of both the tricarboxylic acid (TCA) cycle and the mitochondrial electron transport chain, and which couples the oxidation of succinate to fumarate with the reduction of ubiquinone (coenzyme Q) to ubiquinol. Required for flavinylation (covalent attachment of FAD) of the flavoprotein subunit of the SDH catalytic dimer. The sequence is that of Succinate dehydrogenase assembly factor 2, mitochondrial from Scheffersomyces stipitis (strain ATCC 58785 / CBS 6054 / NBRC 10063 / NRRL Y-11545) (Yeast).